Here is an 876-residue protein sequence, read N- to C-terminus: DNA mismatch repair protein MutS (876 aa).

626–633 contacts ATP; the sequence is GPNMAGKS. The tract at residues 829–856 is disordered; that stretch reads FRAAPPPPAPAAPPKASQVEERLRAIQP. Pro residues predominate over residues 832–841; the sequence is APPPPAPAAP.

It belongs to the DNA mismatch repair MutS family.

Functionally, this protein is involved in the repair of mismatches in DNA. It is possible that it carries out the mismatch recognition step. This protein has a weak ATPase activity. The sequence is that of DNA mismatch repair protein MutS from Cereibacter sphaeroides (strain ATCC 17025 / ATH 2.4.3) (Rhodobacter sphaeroides).